A 216-amino-acid polypeptide reads, in one-letter code: Phosphatidylserine decarboxylase proenzyme (216 aa).

The active-site Schiff-base intermediate with substrate; via pyruvic acid is Ser-182. Position 182 is a pyruvic acid (Ser); by autocatalysis (Ser-182).

The protein belongs to the phosphatidylserine decarboxylase family. PSD-A subfamily. In terms of assembly, heterodimer of a large membrane-associated beta subunit and a small pyruvoyl-containing alpha subunit. It depends on pyruvate as a cofactor. Post-translationally, is synthesized initially as an inactive proenzyme. Formation of the active enzyme involves a self-maturation process in which the active site pyruvoyl group is generated from an internal serine residue via an autocatalytic post-translational modification. Two non-identical subunits are generated from the proenzyme in this reaction, and the pyruvate is formed at the N-terminus of the alpha chain, which is derived from the carboxyl end of the proenzyme. The post-translation cleavage follows an unusual pathway, termed non-hydrolytic serinolysis, in which the side chain hydroxyl group of the serine supplies its oxygen atom to form the C-terminus of the beta chain, while the remainder of the serine residue undergoes an oxidative deamination to produce ammonia and the pyruvoyl prosthetic group on the alpha chain.

Its subcellular location is the cell membrane. It carries out the reaction a 1,2-diacyl-sn-glycero-3-phospho-L-serine + H(+) = a 1,2-diacyl-sn-glycero-3-phosphoethanolamine + CO2. It participates in phospholipid metabolism; phosphatidylethanolamine biosynthesis; phosphatidylethanolamine from CDP-diacylglycerol: step 2/2. In terms of biological role, catalyzes the formation of phosphatidylethanolamine (PtdEtn) from phosphatidylserine (PtdSer). This is Phosphatidylserine decarboxylase proenzyme from Burkholderia pseudomallei (strain 1106a).